We begin with the raw amino-acid sequence, 643 residues long: Maternal embryonic leucine zipper kinase (643 aa).

In terms of domain architecture, Protein kinase spans 11 to 263; the sequence is YELYETIGTG…MRNLLNHPWV (253 aa). ATP is bound by residues 17 to 25 and K40; that span reads IGTGGFAKV. T56 carries the phosphothreonine; by autocatalysis modification. D132 (proton acceptor) is an active-site residue. Position 163 is a phosphotyrosine; by autocatalysis (Y163). T167 is modified (phosphothreonine; by autocatalysis). Residues S171 and S253 each carry the phosphoserine; by autocatalysis modification. The tract at residues 282–321 is UBA-like; the sequence is LDEDCVTELSVHHRSSRQTMEDLISSWQYDHLTATYLLLL. The interval 326–643 is autoinhibitory region; the sequence is RGKPARLQLL…VEDILSGCKM (318 aa). A phosphoserine; by autocatalysis mark is found at S336 and S343. S352 is modified (phosphoserine). Phosphoserine; by autocatalysis occurs at positions 399 and 423. The residue at position 486 (T486) is a Phosphothreonine; by autocatalysis. Phosphoserine is present on S490. S497 carries the phosphoserine; by autocatalysis modification. Position 510 is a phosphothreonine (T510). At S521 the chain carries Phosphoserine; by autocatalysis. At T531 the chain carries Phosphothreonine; by autocatalysis. Positions 594 to 643 constitute a KA1 domain; that stretch reads SDFGKVTMQFELEVCQLQRPDVVGIRRQRLKGDAWVYKRLVEDILSGCKM.

It belongs to the protein kinase superfamily. CAMK Ser/Thr protein kinase family. SNF1 subfamily. In terms of assembly, monomer. Interacts with ZNF622 and PPP1R8. Autophosphorylated: autophosphorylation of the T-loop at Thr-167 and Ser-171 is required for activation. In terms of tissue distribution, expressed in testis, ovary, thymus, spleen and T-cell. Expressed by neural progenitors: highly enriched in cultures containing multipotent progenitors.

The protein localises to the cell membrane. It catalyses the reaction L-tyrosyl-[protein] + ATP = O-phospho-L-tyrosyl-[protein] + ADP + H(+). The enzyme catalyses L-seryl-[protein] + ATP = O-phospho-L-seryl-[protein] + ADP + H(+). The catalysed reaction is L-threonyl-[protein] + ATP = O-phospho-L-threonyl-[protein] + ADP + H(+). Activated by autophosphorylation of the T-loop at Thr-167 and Ser-171: in contrast to other members of the SNF1 subfamily, phosphorylation at Thr-167 is not mediated by STK11/LKB1 but via autophosphorylation instead. Inhibited by calcium-binding. Kinase activity is also regulated by reducing agents: dithiothreitol (DTT) or reduced glutathione are required for kinase activity in vitro; such dependence is however not due to the presence of disulfide bonds. Functionally, serine/threonine-protein kinase involved in various processes such as cell cycle regulation, self-renewal of stem cells, apoptosis and splicing regulation. Has a broad substrate specificity; phosphorylates BCL2L14, CDC25B, MAP3K5/ASK1 and ZNF622. Acts as an activator of apoptosis by phosphorylating and activating MAP3K5/ASK1. Acts as a regulator of cell cycle, notably by mediating phosphorylation of CDC25B, promoting localization of CDC25B to the centrosome and the spindle poles during mitosis. Plays a key role in cell proliferation. Required for proliferation of embryonic and postnatal multipotent neural progenitors. Phosphorylates and inhibits BCL2L14. Also involved in the inhibition of spliceosome assembly during mitosis by phosphorylating ZNF622, thereby contributing to its redirection to the nucleus. May also play a role in primitive hematopoiesis. The chain is Maternal embryonic leucine zipper kinase (Melk) from Mus musculus (Mouse).